Consider the following 29-residue polypeptide: MTLRHYFFLQDYKRNVENLPFYKNQATLQ.

This is an uncharacterized protein from Saccharomyces cerevisiae (strain ATCC 204508 / S288c) (Baker's yeast).